The chain runs to 290 residues: Ig delta chain C region membrane-bound form (290 aa).

Positions P5–T105 constitute an Ig-like 1 domain. C26 and C78 form a disulfide bridge. N-linked (GlcNAc...) asparagine glycosylation is found at N58 and N75. The disordered stretch occupies residues P89–K111. The span at W96–K111 shows a compositional bias: polar residues. N112, N135, and N227 each carry an N-linked (GlcNAc...) asparagine glycan. The Ig-like 2 domain occupies P133–A233. Residues G262–L279 form a helical membrane-spanning segment. Residues Y280–K290 are Cytoplasmic-facing.

In terms of tissue distribution, cell lines producing IgD contain several mRNA species for Ig delta chains. In plasmacytomas, the secreted form is the major component, and the membrane-bound form is a minor component. In spleen, however, the membrane-bound form is the major component. These two forms differ in their C-terminal segments.

It is found in the cell membrane. This is Ig delta chain C region membrane-bound form from Mus musculus (Mouse).